The following is a 295-amino-acid chain: Trimeric intracellular cation channel type A (295 aa).

Residues 1 to 11 lie on the Lumenal side of the membrane; it reads MELLSALSLDD. The helical transmembrane segment at 12–32 threads the bilayer; that stretch reads LAVAFSKLPVFPLFDVAYYII. At 33–51 the chain is on the cytoplasmic side; that stretch reads SILYLKYEPGAVDLSKRSP. The chain crosses the membrane as a helical span at residues 52 to 72; sequence VASWLCAMLYCFGSYILADVL. Residues 73–84 lie on the Lumenal side of the membrane; sequence LGESPIHYFSNN. Glycine 74 contacts Ca(2+). Residues 85–105 form a helical membrane-spanning segment; it reads ANILLASAVWYLTFFCPLNIF. The Cytoplasmic segment spans residues 106 to 144; the sequence is YKIVSFLPLKLVLVGMKEVVRVRKIAMGIHHAHHHYHHG. A 1,2-diacyl-sn-glycero-3-phospho-(1D-myo-inositol-4,5-bisphosphate) contacts are provided by lysine 122 and arginine 126. A helical membrane pass occupies residues 145–165; sequence WVIMVLIGWVKGSGVALMSNL. The Lumenal portion of the chain corresponds to 166-178; that stretch reads EQLLRGVWKPETN. A helical transmembrane segment spans residues 179 to 199; that stretch reads EILHMSFPTKASLYGAILFTL. Topologically, residues 200–201 are cytoplasmic; sequence QQ. Residues 202-222 traverse the membrane as a helical segment; the sequence is AHWLPISKAYLIFFFTLFMAI. Residues 223–233 are Lumenal-facing; sequence CKIYMTATHSH. Residues 234 to 254 traverse the membrane as a helical segment; that stretch reads GSPFAIFESGICCVLFGAANG. Topologically, residues 255–295 are cytoplasmic; the sequence is DHDDHGDHHHHHDDHDVSHSTVKSKEELNEGTRKRKTKKAE. Basic and acidic residues predominate over residues 259–286; the sequence is HGDHHHHHDDHDVSHSTVKSKEELNEGT. Positions 259-295 are disordered; the sequence is HGDHHHHHDDHDVSHSTVKSKEELNEGTRKRKTKKAE.

The protein belongs to the TMEM38 family. In terms of assembly, homotrimer; conformation seems to be controled by binding to diacylglycerol (DAG).

It localises to the sarcoplasmic reticulum membrane. It is found in the nucleus membrane. The enzyme catalyses K(+)(in) = K(+)(out). Its activity is regulated as follows. Channel activity is activated by a change of voltage within the sarcoplasmic reticulum lumen and blocked by luminal high Ca(2+) levels. Functionally, intracellular monovalent cation channel required for maintenance of rapid intracellular calcium release. Acts as a potassium counter-ion channel that functions in synchronization with calcium release from intracellular stores. Opened by a change of voltage within the sarcoplasmic reticulum lumen. This chain is Trimeric intracellular cation channel type A (tmem38a), found in Xenopus tropicalis (Western clawed frog).